Here is a 187-residue protein sequence, read N- to C-terminus: Decorin-binding protein B (187 aa).

A signal peptide spans 1–20 (MKIGKLNSIVMVLFFDLLVA).

The protein belongs to the decorin-binding protein family.

In terms of biological role, binds to decorin which may mediate the adherence of B.burgdorferi to collagen fibers in skin and other tissues. This Borreliella burgdorferi (strain N40) (Borrelia burgdorferi) protein is Decorin-binding protein B (dbpB).